A 92-amino-acid polypeptide reads, in one-letter code: Progonadoliberin-1 (92 aa).

The signal sequence occupies residues 1 to 23; sequence MKPIQKLLAGLILLTWCVEGCSS. The residue at position 24 (Gln24) is a Pyrrolidone carboxylic acid. Glycine amide is present on Gly33.

The protein belongs to the GnRH family. The precursor is cleaved by ACE, which removes the Gly-Lys-Arg peptide at the C-terminus, leading to mature hormone. The mature form of Gonadoliberin-1 is also cleaved and degraded by ACE.

The protein localises to the secreted. In terms of biological role, stimulates the secretion of gonadotropins; it stimulates the secretion of both luteinizing and follicle-stimulating hormones. The chain is Progonadoliberin-1 (GNRH1) from Homo sapiens (Human).